Here is a 945-residue protein sequence, read N- to C-terminus: MSNKKADSKPQSRYPVNLLDTPFPMRGDLPKREPQWVKEWQERKVYETIRAASKGRKKFILHDGPPYANGDIHLGHAVNKILKDMIVKARNLAGFDAVYVPGWDCHGMPIEIQIEKQFGKSLPAAEVMQKARAYATEQIEKQKVGFRRLGVLGDWDNPYKTMNFTNEAGEIRALAKIMEKGYVFRGLKPVNWCFDCGSALAEAEVEYKDKTDPTIDVLFSFAEPEKTAQAFGLSALPREEGGIVIWTTTPWTIPANQALNLHPEIVYALVDTPRGLLILAEERVEACLKLYGLEGTIVATAPGAKLVNVRFNHPLASAHPGYKRTAPVFLGDYVTTETGTGIVHSSPAYGVEDFVSCKAHGMADSDIINPVMGDGRYIESLALFGGLSIWAANPQIVEALQGAGSLMRTEKYTHSYMHCWRHKTPIIYRATSQWFAGMDVKPNDTDKTLRETALEGIENTAFYPAWGKQRLFSMIANRPDWTLSRQRQWGVPMAFFVHKETGELHPRTLELLEEVAQRVEKAGIEAWQTLDPRELLGDDANMYEKNRDTLDVWFDSGTTHWHVLRGSHKDELQFPADLYLEGSDQHRGWFHSSLLTASMLDGRPPYNALLTHGFTVDGEGRKMSKSLGNGIDPHEVANRLGAEIIRLWIASTDYSGELAISEEILKRVTEGYRRIRNTLRFLLANLSDFDFAQHARPVEDWLEIDRYAVALSTNLQNDILSHYDKYEFHPVVAKLQTFCSEDLGGFYLDVLKDRLYTTAADSVARRSAQTALYHIAHGLLRLMAPFLSFTAEEAWKIFQPNSETIFTETYHAFPAVPDAGALLDKWTLLRAARSDVTKALEEARVANLIGSSLQAEVEIRASGARYDALTSLGDDLKFVLITSAATVVKVDSEAEEAVEVIASKYLKCERCWHYRADVGANAEHPTLCDRCFSNLFGNGEIRSAA.

The 'HIGH' region signature appears at 66–76 (PYANGDIHLGH). An L-isoleucyl-5'-AMP-binding site is contributed by Glu581. The short motif at 622 to 626 (KMSKS) is the 'KMSKS' region element. Residue Lys625 coordinates ATP. Cys908, Cys911, Cys928, and Cys931 together coordinate Zn(2+).

It belongs to the class-I aminoacyl-tRNA synthetase family. IleS type 1 subfamily. As to quaternary structure, monomer. Requires Zn(2+) as cofactor.

The protein localises to the cytoplasm. The enzyme catalyses tRNA(Ile) + L-isoleucine + ATP = L-isoleucyl-tRNA(Ile) + AMP + diphosphate. Catalyzes the attachment of isoleucine to tRNA(Ile). As IleRS can inadvertently accommodate and process structurally similar amino acids such as valine, to avoid such errors it has two additional distinct tRNA(Ile)-dependent editing activities. One activity is designated as 'pretransfer' editing and involves the hydrolysis of activated Val-AMP. The other activity is designated 'posttransfer' editing and involves deacylation of mischarged Val-tRNA(Ile). The chain is Isoleucine--tRNA ligase from Paraburkholderia phytofirmans (strain DSM 17436 / LMG 22146 / PsJN) (Burkholderia phytofirmans).